The following is an 881-amino-acid chain: Alanine--tRNA ligase (881 aa).

Zn(2+) contacts are provided by His-568, His-572, Cys-670, and His-674.

This sequence belongs to the class-II aminoacyl-tRNA synthetase family. Zn(2+) serves as cofactor.

Its subcellular location is the cytoplasm. The catalysed reaction is tRNA(Ala) + L-alanine + ATP = L-alanyl-tRNA(Ala) + AMP + diphosphate. Its function is as follows. Catalyzes the attachment of alanine to tRNA(Ala) in a two-step reaction: alanine is first activated by ATP to form Ala-AMP and then transferred to the acceptor end of tRNA(Ala). Also edits incorrectly charged Ser-tRNA(Ala) and Gly-tRNA(Ala) via its editing domain. In Moorella thermoacetica (strain ATCC 39073 / JCM 9320), this protein is Alanine--tRNA ligase.